A 104-amino-acid polypeptide reads, in one-letter code: Pyrimidine/purine nucleoside phosphorylase (104 aa).

Belongs to the nucleoside phosphorylase PpnP family.

It carries out the reaction a purine D-ribonucleoside + phosphate = a purine nucleobase + alpha-D-ribose 1-phosphate. The catalysed reaction is adenosine + phosphate = alpha-D-ribose 1-phosphate + adenine. The enzyme catalyses cytidine + phosphate = cytosine + alpha-D-ribose 1-phosphate. It catalyses the reaction guanosine + phosphate = alpha-D-ribose 1-phosphate + guanine. It carries out the reaction inosine + phosphate = alpha-D-ribose 1-phosphate + hypoxanthine. The catalysed reaction is thymidine + phosphate = 2-deoxy-alpha-D-ribose 1-phosphate + thymine. The enzyme catalyses uridine + phosphate = alpha-D-ribose 1-phosphate + uracil. It catalyses the reaction xanthosine + phosphate = alpha-D-ribose 1-phosphate + xanthine. Its function is as follows. Catalyzes the phosphorolysis of diverse nucleosides, yielding D-ribose 1-phosphate and the respective free bases. Can use uridine, adenosine, guanosine, cytidine, thymidine, inosine and xanthosine as substrates. Also catalyzes the reverse reactions. The protein is Pyrimidine/purine nucleoside phosphorylase of Trichlorobacter lovleyi (strain ATCC BAA-1151 / DSM 17278 / SZ) (Geobacter lovleyi).